A 131-amino-acid polypeptide reads, in one-letter code: MLGSLSWEHMLVLVVVGLVVLGPERLPGAIRWTSNALRQARDYLSGVTTQLREDLGPEFDDLRVPLSELQKLRGMTPRAALTKHLLDGDDSFLTGAFDRPVNGAAAQPPPAPAPPPEPHRPGQTPFDADAT.

Residues 2-22 traverse the membrane as a helical segment; that stretch reads LGSLSWEHMLVLVVVGLVVLG. A disordered region spans residues 96 to 131; sequence AFDRPVNGAAAQPPPAPAPPPEPHRPGQTPFDADAT. A compositionally biased stretch (pro residues) spans 107 to 116; sequence QPPPAPAPPP.

This sequence belongs to the TatB family. In terms of assembly, the Tat system comprises two distinct complexes: a TatABC complex, containing multiple copies of TatA, TatB and TatC subunits, and a separate TatA complex, containing only TatA subunits. Substrates initially bind to the TatABC complex, which probably triggers association of the separate TatA complex to form the active translocon.

It is found in the cell membrane. Its function is as follows. Part of the twin-arginine translocation (Tat) system that transports large folded proteins containing a characteristic twin-arginine motif in their signal peptide across membranes. Together with TatC, TatB is part of a receptor directly interacting with Tat signal peptides. TatB may form an oligomeric binding site that transiently accommodates folded Tat precursor proteins before their translocation. In Mycobacterium avium (strain 104), this protein is Sec-independent protein translocase protein TatB.